Consider the following 310-residue polypeptide: MRTHDDTWDIKTSVGTTAVMVAAARAAETDRPDALIRDPYAKLLVTNTGAGALWEAMLDPSMVAKVEAIDAEAAAMVEHMRSYQAVRTNFFDTYFNNAVIDGIRQFVILASGLDSRAYRLDWPTGTTVYEIDQPKVLAYKSTTLAEHGVTPTADRREVPIDLRQDWPPALRSAGFDPSARTAWLAEGLLMYLPATAQDGLFTEIGGLSAVGSRIAVETSPLHGDEWREQMQLRFRRVSDALGFEQAVDVQELIYHDENRAVVADWLNRHGWRATAQSAPDEMRRVGRWGDGVPMADDKDAFAEFVTAHRL.

S-adenosyl-L-methionine-binding positions include Asp-132 and 161–162; that span reads DL.

Belongs to the UPF0677 family.

In terms of biological role, exhibits S-adenosyl-L-methionine-dependent methyltransferase activity. The chain is Putative S-adenosyl-L-methionine-dependent methyltransferase ML2640 from Mycobacterium leprae (strain TN).